The primary structure comprises 460 residues: L-seryl-tRNA(Sec) selenium transferase (460 aa).

Lys-293 carries the post-translational modification N6-(pyridoxal phosphate)lysine.

The protein belongs to the SelA family. Pyridoxal 5'-phosphate is required as a cofactor.

The protein localises to the cytoplasm. The enzyme catalyses L-seryl-tRNA(Sec) + selenophosphate + H(+) = L-selenocysteinyl-tRNA(Sec) + phosphate. Its pathway is aminoacyl-tRNA biosynthesis; selenocysteinyl-tRNA(Sec) biosynthesis; selenocysteinyl-tRNA(Sec) from L-seryl-tRNA(Sec) (bacterial route): step 1/1. Its function is as follows. Converts seryl-tRNA(Sec) to selenocysteinyl-tRNA(Sec) required for selenoprotein biosynthesis. The chain is L-seryl-tRNA(Sec) selenium transferase from Haemophilus ducreyi (strain 35000HP / ATCC 700724).